The chain runs to 168 residues: Protein yop-1 (168 aa).

The Cytoplasmic segment spans residues 1 to 35 (MSSPQDRAQQYIGQLDKELSKYPTLNNLEKTTGVP). Residues 36–55 (KAYAVIGLVALYFFLIIFNL) traverse the membrane as a helical segment. Position 56 (G56) is a topological domain, lumenal. Residues 57-76 (GQLLTNLAGFVLPGYYSLNA) form a helical membrane-spanning segment. Residues 77–86 (LFTASKQDDT) lie on the Cytoplasmic side of the membrane. Residues 87 to 103 (QWLTYWVVFSLFTVIES) form a helical membrane-spanning segment. Topologically, residues 104-105 (LI) are lumenal. The chain crosses the membrane as a helical span at residues 106 to 124 (SVVYWFPFYFTFKFVFLLW). The Cytoplasmic portion of the chain corresponds to 125-168 (LSLPTFKGAETIFRSFLAPTLGRYFQNGSTASGLRAKADAVHTD).

Belongs to the DP1 family. As to quaternary structure, oligomer.

The protein resides in the endoplasmic reticulum membrane. It localises to the golgi apparatus membrane. Its function is as follows. Required to generate and maintain the structure of the tubular endoplasmic reticulum network and the vacuole. Induces high curvature in membranes and causes membrane tubule formation. Involved in membrane/vesicle trafficking. The chain is Protein yop-1 (yop-1) from Neurospora crassa (strain ATCC 24698 / 74-OR23-1A / CBS 708.71 / DSM 1257 / FGSC 987).